A 1119-amino-acid polypeptide reads, in one-letter code: Putative transcription factor SEF1 (1119 aa).

Disordered stretches follow at residues 1 to 70 and 86 to 105; these read MGDP…TQSR and QNGEDSSNISNNSNAVSKGK. Residues 47–70 show a composition bias toward polar residues; it reads LHTQQSYYGNGTDGASESALTQSR. Positions 118-148 form a DNA-binding region, zn(2)-C6 fungal-type; that stretch reads CTHCRQHKIKCNASEKFPAPCSRCERMGLHC. 5 disordered regions span residues 236-290, 306-335, 894-913, 926-962, and 994-1018; these read QLLQ…PANT, SQQISSSSPQNSSPTTTGHSPANDLSSSKQ, ASSSSTATRLNADNPTTDTN, KKSSKSSDTPTNKPKFNSTSSIPTATPTSEQRAAHNT, and SADSNGTSNNNIPNSTAPLNTPDTN. Over residues 243–260 the composition is skewed to low complexity; sequence TTTTNPTTSSNSKVVTPT. The segment covering 261 to 288 has biased composition (polar residues); the sequence is GSDHSPASHNGGSLSSGKPQLLNDSVPA. The span at 306–322 shows a compositional bias: low complexity; that stretch reads SQQISSSSPQNSSPTTT. Polar residues-rich tracts occupy residues 323–335, 902–913, and 931–942; these read GHSPANDLSSSKQ, RLNADNPTTDTN, and SSDTPTNKPKFN. Over residues 943-954 the composition is skewed to low complexity; that stretch reads STSSIPTATPTS.

It is found in the nucleus. In terms of biological role, putative transcription factor. Suppresses the lethal phenotype of RPM2 deletion. The polypeptide is Putative transcription factor SEF1 (SEF1) (Kluyveromyces lactis (strain ATCC 8585 / CBS 2359 / DSM 70799 / NBRC 1267 / NRRL Y-1140 / WM37) (Yeast)).